The chain runs to 118 residues: V-type proton ATPase subunit G 2 (118 aa).

The segment at Ala23–Asn91 is disordered. Positions Gln35–Phe55 are enriched in basic and acidic residues. 2 stretches are compositionally biased toward polar residues: residues Gln56–Leu69 and Arg78–Gln89.

The protein belongs to the V-ATPase G subunit family. V-ATPase is a heteromultimeric enzyme made up of two complexes: the ATP-hydrolytic V1 complex and the proton translocation V0 complex. The V1 complex consists of three catalytic AB heterodimers that form a heterohexamer, three peripheral stalks each consisting of EG heterodimers, one central rotor including subunits D and F, and the regulatory subunits C and H. The proton translocation complex V0 consists of the proton transport subunit a, a ring of proteolipid subunits c9c'', rotary subunit d, subunits e and f, and the accessory subunits ATP6AP1/Ac45 and ATP6AP2/PRR.

The protein localises to the melanosome. It is found in the cytoplasmic vesicle. The protein resides in the clathrin-coated vesicle membrane. In terms of biological role, subunit of the V1 complex of vacuolar(H+)-ATPase (V-ATPase), a multisubunit enzyme composed of a peripheral complex (V1) that hydrolyzes ATP and a membrane integral complex (V0) that translocates protons. V-ATPase is responsible for acidifying and maintaining the pH of intracellular compartments and in some cell types, is targeted to the plasma membrane, where it is responsible for acidifying the extracellular environment. The polypeptide is V-type proton ATPase subunit G 2 (Atp6v1g2) (Mus musculus (Mouse)).